A 625-amino-acid polypeptide reads, in one-letter code: Adenine deaminase 2 (625 aa).

This sequence belongs to the metallo-dependent hydrolases superfamily. Adenine deaminase family. The cofactor is Mn(2+).

It carries out the reaction adenine + H2O + H(+) = hypoxanthine + NH4(+). This chain is Adenine deaminase 2, found in Bradyrhizobium diazoefficiens (strain JCM 10833 / BCRC 13528 / IAM 13628 / NBRC 14792 / USDA 110).